The sequence spans 958 residues: Isoleucine--tRNA ligase (958 aa).

Residues 1 to 32 form a disordered region; sequence MSDNQNKPGKPAAKPQSKYPVNMTDTPFPMRG. Residues 71–81 carry the 'HIGH' region motif; sequence PYANGDIHLGH. Glu590 contacts L-isoleucyl-5'-AMP. The 'KMSKS' region motif lies at 631–635; sequence KMSKS. Lys634 provides a ligand contact to ATP. Zn(2+) contacts are provided by Cys921, Cys924, Cys941, and Cys944.

It belongs to the class-I aminoacyl-tRNA synthetase family. IleS type 1 subfamily. In terms of assembly, monomer. Zn(2+) is required as a cofactor.

The protein localises to the cytoplasm. The catalysed reaction is tRNA(Ile) + L-isoleucine + ATP = L-isoleucyl-tRNA(Ile) + AMP + diphosphate. In terms of biological role, catalyzes the attachment of isoleucine to tRNA(Ile). As IleRS can inadvertently accommodate and process structurally similar amino acids such as valine, to avoid such errors it has two additional distinct tRNA(Ile)-dependent editing activities. One activity is designated as 'pretransfer' editing and involves the hydrolysis of activated Val-AMP. The other activity is designated 'posttransfer' editing and involves deacylation of mischarged Val-tRNA(Ile). In Janthinobacterium sp. (strain Marseille) (Minibacterium massiliensis), this protein is Isoleucine--tRNA ligase.